Here is a 1426-residue protein sequence, read N- to C-terminus: ABC transporter G family member 31 (1426 aa).

The ABC transporter 1 domain maps to 142–415 (LRHLRIYRGG…FAGMGFRCPE (274 aa)). 175–182 (GPPSSGKT) provides a ligand contact to ATP. An ABC transmembrane type-2 1 domain is found at 493–706 (ELLKSNFQWQ…AQNAISVNEF (214 aa)). The next 7 membrane-spanning stretches (helical) occupy residues 511 to 531 (FIYVFKFIQLLLVALITMTVF), 544 to 564 (GIIYLGALYFAIVMILFNGFT), 592 to 612 (LPSWLLSIPTSLIESGMWVLV), 630 to 650 (FLLLFFLHQTSLALFRVMASL), 655 to 675 (IVANTFGSFALLVVMILGGFI), 681 to 701 (IPAWWIWGYWISPMMYAQNAI), and 741 to 761 (IGVGALFGYAIVLNFLFTLFL). The 253-residue stretch at 824-1076 (MCFKNINYYV…NLVEFFEAIP (253 aa)) folds into the ABC transporter 2 domain. 869–876 (GVSGAGKT) is a binding site for ATP. One can recognise an ABC transmembrane type-2 2 domain in the interval 1149 to 1363 (AQYAACLWKQ…TLYGLLTSQF (215 aa)). 7 helical membrane passes run 1168–1188 (YTAVRFFYTVIISLMFGTICW), 1200–1220 (IFNAMGAMYAAVLFIGITNAT), 1245–1265 (LPFAFSLVTVEFPYILVQSLI), 1283–1303 (FLWYLFFMYFTLLYFTFYGMM), 1313–1333 (VAPIIAAPFYTLWNLFCGFMI), 1341–1363 (WWRWYYWANPVSWTLYGLLTSQF), and 1398–1418 (VVAGMVAGFCVLFAVVFALAI).

This sequence belongs to the ABC transporter superfamily. ABCG family. PDR (TC 3.A.1.205) subfamily.

It is found in the membrane. May be a general defense protein. The sequence is that of ABC transporter G family member 31 from Oryza sativa subsp. japonica (Rice).